The following is a 1209-amino-acid chain: Calcium-activated potassium channel subunit alpha-1 (1209 aa).

Positions 1–26 (MANGGGGGGGGSSGSSGGGGGGGGGE) are enriched in gly residues. Disordered stretches follow at residues 1 to 29 (MANG…ETAL) and 42 to 64 (LDAS…SVHE). The Extracellular portion of the chain corresponds to 1-87 (MANGGGGGGG…VPCDSRGQRM (87 aa)). The segment covering 45-61 (SSSSSSSSSSSSSSSSS) has biased composition (low complexity). Residues 88 to 108 (WWAFLASSMVTFFGGLFIILL) traverse the membrane as a helical segment. Topologically, residues 109 to 179 (WRTLKYLWTV…MISAQTLTGR (71 aa)) are cytoplasmic. S-palmitoyl cysteine attachment occurs at residues Cys-119, Cys-120, and Cys-122. Residues 180–200 (VLVVLVFALSIGALVIYFIDS) traverse the membrane as a helical segment. Residues 201 to 215 (SNPIESCQNFYKDFT) are Extracellular-facing. A helical transmembrane segment spans residues 216-236 (LQIDMAFNVFFLLYFGLRFIA). The Cytoplasmic portion of the chain corresponds to 237–240 (ANDK). Residues 241 to 261 (LWFWLEVNSVVDFFTVPPVFV) traverse the membrane as a helical segment. Residues 262 to 265 (SVYL) lie on the Extracellular side of the membrane. A helical; Voltage-sensor transmembrane segment spans residues 266–286 (NRSWLGLRFLRALRLIQFSEI). Residues 287–301 (LQFLNILKTSNSIKL) are Cytoplasmic-facing. The chain crosses the membrane as a helical span at residues 302 to 322 (VNLLSIFISTWLTAAGFIHLV). At 323 to 336 (ENSGDPWENFQNNQ) the chain is on the extracellular side. Positions 337-359 (ALTYWECVYLLMVTMSTVGYGDV) form an intramembrane region, pore-forming. The Selectivity for potassium motif lies at 353–356 (TVGY). Topologically, residues 360-368 (YAKTTLGRL) are extracellular. The helical transmembrane segment at 369–389 (FMVFFILGGLAMFASYVPEII) threads the bilayer. Residues 390–1209 (ELIGNRKKYG…DKQKKEMVYR (820 aa)) lie on the Cytoplasmic side of the membrane. The 143-residue stretch at 408–550 (RKHIVVCGHI…WNWKEGDDAI (143 aa)) folds into the RCK N-terminal 1 domain. Residues Glu-440, Gln-463, and Glu-465 each coordinate Mg(2+). The interval 557–577 (LGFIAQSCLAQGLSTMLANLF) is segment S7. A segment S8 region spans residues 614–634 (LSFPTVCELCFVKLKLLMIAI). The heme-binding motif stretch occupies residues 682–686 (CKACH). The tract at residues 704–734 (EDEQPPTLSPKKKQRNGGMRNSPNTSPKLMR) is disordered. Phosphothreonine is present on Thr-710. Phosphoserine occurs at positions 712, 725, and 729. The interval 784–804 (VLSGHVVVCIFGDVSSALIGL) is segment S9. An RCK N-terminal 2 domain is found at 786 to 930 (SGHVVVCIFG…MDRSSPDNSP (145 aa)). Thr-917 is subject to Phosphothreonine. A phosphoserine mark is found at Ser-925 and Ser-929. The Calcium bowl signature appears at 977–999 (TELVNDTNVQFLDQDDDDDPDTE). Ca(2+)-binding residues include Gln-986, Asp-989, Asp-992, and Asp-994. A segment S10 region spans residues 1006–1026 (FACGTAFAVSVLDSLMSATYF). The span at 1160-1185 (RASLSHSSHSSQSSSKKSSSVHSIPS) shows a compositional bias: low complexity. The interval 1160–1209 (RASLSHSSHSSQSSSKKSSSVHSIPSTANRPNRPKSRESRDKQKKEMVYR) is disordered. Basic and acidic residues predominate over residues 1194–1209 (KSRESRDKQKKEMVYR). Ser-1195 and Ser-1198 each carry phosphoserine.

Belongs to the potassium channel family. Calcium-activated (TC 1.A.1.3) subfamily. KCa1.1/KCNMA1 sub-subfamily. Homotetramer; which constitutes the calcium-activated potassium channel. Interacts with beta subunits KCNMB1, KCNMB2, KCNMB3 and KCNMB4. Interacts with gamma subunits LRRC26, LRRC38, LRRC52 and LRRC55. Beta and gamma subunits are accessory, and modulate its activity. Interacts with RAB11B. Phosphorylated. Phosphorylation by kinases such as PKA and/or PKG. In smooth muscles, phosphorylation affects its activity. Post-translationally, palmitoylation by ZDHHC22 and ZDHHC23 within the intracellular linker between the S0 and S1 transmembrane domains regulates localization to the plasma membrane. Depalmitoylated by LYPLA1 and LYPLAL1, leading to retard exit from the trans-Golgi network.

Its subcellular location is the cell membrane. It is found in the endoplasmic reticulum membrane. It carries out the reaction K(+)(in) = K(+)(out). With respect to regulation, ethanol and carbon monoxide-bound heme increase channel activation. Its activity is regulated as follows. Heme inhibits channel activation. Its function is as follows. Potassium channel activated by both membrane depolarization or increase in cytosolic Ca(2+) that mediates export of K(+). It is also activated by the concentration of cytosolic Mg(2+). Its activation dampens the excitatory events that elevate the cytosolic Ca(2+) concentration and/or depolarize the cell membrane. It therefore contributes to repolarization of the membrane potential. Plays a key role in controlling excitability in a number of systems, such as regulation of the contraction of smooth muscle, the tuning of hair cells in the cochlea, regulation of transmitter release, and innate immunity. In smooth muscles, its activation by high level of Ca(2+), caused by ryanodine receptors in the sarcoplasmic reticulum, regulates the membrane potential. In cochlea cells, its number and kinetic properties partly determine the characteristic frequency of each hair cell and thereby helps to establish a tonotopic map. Kinetics of KCNMA1 channels are determined by alternative splicing, phosphorylation status and its combination with modulating beta subunits. Highly sensitive to both iberiotoxin (IbTx) and charybdotoxin (CTX). Functionally, potassium channel activated by both membrane depolarization or increase in cytosolic Ca(2+) that mediates export of K(+). In Rattus norvegicus (Rat), this protein is Calcium-activated potassium channel subunit alpha-1 (Kcnma1).